Consider the following 363-residue polypeptide: L-serine dehydratase/L-threonine deaminase (363 aa).

Ala-2 carries the post-translational modification N-acetylalanine. Lys-41 is subject to N6-(pyridoxal phosphate)lysine. Residues 74–98 (RGRSHSGDEQPHVRSQALLPDTPSP) form a disordered region. A pyridoxal 5'-phosphate-binding site is contributed by Pro-164.

Belongs to the serine/threonine dehydratase family. Homodimer. Pyridoxal 5'-phosphate serves as cofactor. Predominantly expressed in the periportal regions of the liver.

It localises to the cytoplasm. The enzyme catalyses L-serine = pyruvate + NH4(+). It catalyses the reaction L-threonine = 2-oxobutanoate + NH4(+). The protein operates within carbohydrate biosynthesis; gluconeogenesis. In terms of biological role, catalyzes the pyridoxal-phosphate-dependent dehydrative deamination of L-threonine and L-serine to ammonia and alpha-ketobutyrate and pyruvate, respectively. This chain is L-serine dehydratase/L-threonine deaminase (Sds), found in Rattus norvegicus (Rat).